The sequence spans 380 residues: GDP-mannose:cellobiosyl-diphosphopolyprenol alpha-mannosyltransferase (380 aa).

The protein belongs to the glycosyltransferase group 1 family. Glycosyltransferase 4 subfamily.

It carries out the reaction beta-D-Glc-(1-&gt;4)-alpha-D-Glc-di-trans,octa-cis-undecaprenyl diphosphate + GDP-alpha-D-mannose = alpha-D-Man-(1-&gt;3)-beta-D-Glc-(1-&gt;4)-alpha-D-Glc-1-di-trans,octa-cis-undecaprenyl diphosphate + GDP + H(+). Involved in the biosynthesis of the exopolysaccharide xanthan, a polymer that is comprised of repeating pentasaccharide units with the structure of a beta-(1,4)-linked D-glucose backbone with trisaccharide side chains composed of mannose-beta-(1,4)-glucuronic acid-beta-(1,2)-mannose attached to alternate glucose residues in the backbone by alpha-(1,3) linkages. Xanthan is involved in pathogenicity but has also been used in a variety of applications as a specialty polymer for commercial applications, including food additives, where they act as viscosifying, stabilizing, emulsifying, or gelling agents. This is GDP-mannose:cellobiosyl-diphosphopolyprenol alpha-mannosyltransferase (gumH) from Xanthomonas oryzae pv. oryzae (strain PXO99A).